A 186-amino-acid polypeptide reads, in one-letter code: GMP synthase [glutamine-hydrolyzing] subunit A (186 aa).

Residues 3-186 (MILIINNHGQ…FENFYDVCRS (184 aa)) enclose the Glutamine amidotransferase type-1 domain. The active-site Nucleophile is Cys-77. Residues His-164 and Glu-166 contribute to the active site.

As to quaternary structure, heterodimer composed of a glutamine amidotransferase subunit (A) and a GMP-binding subunit (B).

It catalyses the reaction XMP + L-glutamine + ATP + H2O = GMP + L-glutamate + AMP + diphosphate + 2 H(+). It participates in purine metabolism; GMP biosynthesis; GMP from XMP (L-Gln route): step 1/1. Catalyzes the synthesis of GMP from XMP. The chain is GMP synthase [glutamine-hydrolyzing] subunit A from Methanothermobacter thermautotrophicus (strain ATCC 29096 / DSM 1053 / JCM 10044 / NBRC 100330 / Delta H) (Methanobacterium thermoautotrophicum).